The following is a 968-amino-acid chain: MPFTLGQRWISDTESELGLGTVVALDARMVTLLFPAIGENRLYSRNDSPITRVMFNPGDTITSHEGWQLHVDKVNEENGLLSYTGTRLDTQEANVTLREVLLDSKLVFSKPQDRLFAGQIDRMDRFALRYRARKFQSEQYRMPWSGLRGQRTSLIPHQLHIAHDVGRRHAPRVLLADEVGLGKTIEAGMILHQQLLSGAAERVLIVVPETLQHQWLVEMLRRFNLRFSLFDDERYAEAQHDAYNPFETEQLVICSLDFVRRSKQRLEHLCDAEWDLMVVDEAHHLVWSEEAPSREYQAIEQLAERVPGILLLTATPEQLGMESHFARLRLLDPNRFHDFEQFVEEQQNYRPVADAVALLLAGNKLSDSELNTLGDLIGEQDIEPLLQAANSDREDAQAARQELISMLMDRHGTSRVLFRNTRNGVKGFPKRELHTIRLPLPTQYQTAIKVSGIMGARKTAEERARDMLYPEQIYQEFEGDTGTWWNFDPRVEWLMGYLTSHRSQKVLVICAKAATALQLEQVLREREGIRAAVFHEGMSIIERDRAAAWFAEEDTGAQVLLCSEIGSEGRNFQFASNLVMFDLPFNPDLLEQRIGRLDRIGQAHDIQIHVPYLEKTAQSVLVRWYHEGLDAFEHTCPTGRTVYDSVHDELINYLAAPESIDGFDDLIKSCRQQHDALKAQLEQGRDRLLEIHSNGGEKAQALAESIEEQDDDTSLIAFSMNLFDIVGINQDDRGENLIVLTPSDHMLVPDFPGLPEDGCTITFERDVALSREDAQFITWEHPLIRNGLDLILSGDTGSSTISLLKNKALPVGTLLLELIYVVEAQAPKQLQLNRFLPATPVRMLLDKNGNNLAAQVEFESFNRQLSAVNRHTGSKLVNAVQQDVHAILQQGEAQIAKAAQGLIDAARNEADEKLTAELSRLEALKAVNPNIRDDELAAIESNRQQVMDALAQAGWRLDALRLIVVTHQ.

The Helicase ATP-binding domain occupies aspartate 164–asparagine 334. Aspartate 177 to threonine 184 provides a ligand contact to ATP. Residues aspartate 280–histidine 283 carry the DEAH box motif. The Helicase C-terminal domain maps to arginine 490–aspartate 644.

This sequence belongs to the SNF2/RAD54 helicase family. RapA subfamily. As to quaternary structure, interacts with the RNAP. Has a higher affinity for the core RNAP than for the holoenzyme. Its ATPase activity is stimulated by binding to RNAP.

In terms of biological role, transcription regulator that activates transcription by stimulating RNA polymerase (RNAP) recycling in case of stress conditions such as supercoiled DNA or high salt concentrations. Probably acts by releasing the RNAP, when it is trapped or immobilized on tightly supercoiled DNA. Does not activate transcription on linear DNA. Probably not involved in DNA repair. This chain is RNA polymerase-associated protein RapA, found in Klebsiella pneumoniae subsp. pneumoniae (strain ATCC 700721 / MGH 78578).